We begin with the raw amino-acid sequence, 142 residues long: Hemoglobin larval subunit alpha (142 aa).

Residues 2-142 (VLSAEEKALV…VSAVLTSKYR (141 aa)) form the Globin domain. O2 is bound at residue His59. Residue His88 participates in heme b binding.

It belongs to the globin family. Heterotetramer of two alpha chains and two beta chains. In terms of tissue distribution, red blood cells.

In terms of biological role, involved in oxygen transport from the lung to the various peripheral tissues. The polypeptide is Hemoglobin larval subunit alpha (Pleurodeles waltl (Iberian ribbed newt)).